The following is a 426-amino-acid chain: Tryptophan--tRNA ligase (426 aa).

Residues 66 to 74 (PSGEMHLGN) carry the 'HIGH' region motif. Residues 314-318 (KMSSS) carry the 'KMSKS' region motif.

It belongs to the class-I aminoacyl-tRNA synthetase family.

The protein localises to the cytoplasm. The enzyme catalyses tRNA(Trp) + L-tryptophan + ATP = L-tryptophyl-tRNA(Trp) + AMP + diphosphate + H(+). This is Tryptophan--tRNA ligase from Thermoplasma acidophilum (strain ATCC 25905 / DSM 1728 / JCM 9062 / NBRC 15155 / AMRC-C165).